Here is a 599-residue protein sequence, read N- to C-terminus: Leishmanolysin (599 aa).

The N-terminal stretch at 1–39 is a signal peptide; it reads MSVDSSSTHRHRSVAARLVRLAAAGAAVIAAVGTAAAWA. Positions 40–97 are cleaved as a propeptide — activation peptide; sequence HAGAVQHRCIHDAMQARVRQSVARHHTAPGAVSAVGLPYVTLDTAAAADRRPGSAPTV. Disulfide bonds link Cys122–Cys139 and Cys188–Cys227. His261 is a Zn(2+) binding site. The active site involves Glu262. His265 is a binding site for Zn(2+). Asn297 is a glycosylation site (N-linked (GlcNAc...) asparagine). Cystine bridges form between Cys311–Cys383, Cys390–Cys452, Cys403–Cys422, Cys412–Cys486, Cys463–Cys507, Cys512–Cys562, and Cys532–Cys555. Residue His331 coordinates Zn(2+). Asn394 carries an N-linked (GlcNAc...) asparagine glycan. A lipid anchor (GPI-anchor amidated asparagine) is attached at Asn574. A propeptide spans 575-599 (removed in mature form); the sequence is AAAGRRGPRAAATALLVAALLAVAL.

Belongs to the peptidase M8 family. Requires Zn(2+) as cofactor.

Its subcellular location is the cell membrane. The catalysed reaction is Preference for hydrophobic residues at P1 and P1' and basic residues at P2' and P3'. A model nonapeptide is cleaved at -Ala-Tyr-|-Leu-Lys-Lys-.. Has an integral role during the infection of macrophages in the mammalian host. The polypeptide is Leishmanolysin (gp63) (Leishmania chagasi).